Reading from the N-terminus, the 458-residue chain is Sphingoid long chain base kinase 4 (458 aa).

In terms of domain architecture, DAGKc spans 103 to 241 (KRSRRFIVFI…FDLMTFEQKG (139 aa)). ATP contacts are provided by residues 113–115 (NPH) and Thr145. 170–173 (GGDG) provides a ligand contact to substrate. Asp172 serves as the catalytic Proton donor/acceptor. ATP contacts are provided by residues Glu177, 202–204 (GSG), Arg266, Arg272, and 426–428 (DGE).

It localises to the cell membrane. It is found in the endoplasmic reticulum membrane. Its subcellular location is the late endosome membrane. The protein resides in the golgi apparatus membrane. The catalysed reaction is a sphingoid base + ATP = a sphingoid 1-phosphate + ADP + H(+). Catalyzes the phosphorylation of the sphingoid long chain bases dihydrosphingosine (DHS) and phytosphingosine (PHS) to form dihydrosphingosine 1-phosphate (DHS-1P) and phytosphingosine 1-phosphate (PHS-1P) respectively. Involved in the biosynthesis of sphingolipids and ceramides. Involved in heat-induced transient cell cycle arrest. Accumulation of phosphorylated sphingoid long chain bases (LCBPs) stimulates calcium influx and activates calcineurin signaling. Involved in heat-stress resistance. The chain is Sphingoid long chain base kinase 4 (lcb4) from Schizosaccharomyces pombe (strain 972 / ATCC 24843) (Fission yeast).